The sequence spans 366 residues: Histidinol-phosphate aminotransferase 2 (366 aa).

The disordered stretch occupies residues M1–Q21. K222 carries the N6-(pyridoxal phosphate)lysine modification.

The protein belongs to the class-II pyridoxal-phosphate-dependent aminotransferase family. Histidinol-phosphate aminotransferase subfamily. Homodimer. The cofactor is pyridoxal 5'-phosphate.

The catalysed reaction is L-histidinol phosphate + 2-oxoglutarate = 3-(imidazol-4-yl)-2-oxopropyl phosphate + L-glutamate. The protein operates within amino-acid biosynthesis; L-histidine biosynthesis; L-histidine from 5-phospho-alpha-D-ribose 1-diphosphate: step 7/9. The polypeptide is Histidinol-phosphate aminotransferase 2 (Bacillus cereus (strain ZK / E33L)).